We begin with the raw amino-acid sequence, 309 residues long: Probable lipid kinase YegS-like (309 aa).

A DAGKc domain is found at 1–134; it reads MAPSHWRLIL…VDLLRIDAEH (134 aa). Residues Thr39, 65–71, and Thr96 contribute to the ATP site; that span reads GDGTLSE. The Mg(2+) site is built by Val219, Asp222, and Leu224. Catalysis depends on Glu280, which acts as the Proton acceptor.

It belongs to the diacylglycerol/lipid kinase family. YegS lipid kinase subfamily. Mg(2+) serves as cofactor. Requires Ca(2+) as cofactor.

It is found in the cytoplasm. In terms of biological role, probably phosphorylates lipids; the in vivo substrate is unknown. This chain is Probable lipid kinase YegS-like, found in Xanthomonas oryzae pv. oryzae (strain MAFF 311018).